A 318-amino-acid polypeptide reads, in one-letter code: Dimethyladenosine transferase (318 aa).

S-adenosyl-L-methionine-binding residues include H37, L39, G64, E85, D113, and N128.

The protein belongs to the class I-like SAM-binding methyltransferase superfamily. rRNA adenine N(6)-methyltransferase family.

It is found in the cytoplasm. It localises to the nucleus. Its subcellular location is the nucleolus. It carries out the reaction adenosine(1779)/adenosine(1780) in 18S rRNA + 4 S-adenosyl-L-methionine = N(6)-dimethyladenosine(1779)/N(6)-dimethyladenosine(1780) in 18S rRNA + 4 S-adenosyl-L-homocysteine + 4 H(+). In terms of biological role, specifically dimethylates two adjacent adenosines in the loop of a conserved hairpin near the 3'-end of 18S rRNA in the 40S particle. The protein is Dimethyladenosine transferase of Saccharomyces cerevisiae (strain ATCC 204508 / S288c) (Baker's yeast).